A 279-amino-acid chain; its full sequence is Prepilin leader peptidase/N-methyltransferase (279 aa).

Residues 1–16 are Periplasmic-facing; it reads MDDLREFAQLFPAWWF. A helical membrane pass occupies residues 17–35; that stretch reads GALGVLGLIVGSFLNVVIY. Residues 36–104 lie on the Cytoplasmic side of the membrane; that stretch reads RLPIMLERRW…RSRCCHQSVS (69 aa). The helical transmembrane segment at 105-123 threads the bilayer; it reads VQYPLVEVITMLAFLAAGL. Residues 124-130 lie on the Periplasmic side of the membrane; it reads LWLPGMA. The helical transmembrane segment at 131–149 threads the bilayer; it reads LWGALILLSFLLVLTVIDI. At 150–163 the chain is on the cytoplasmic side; the sequence is KTLLLPDELTLSLL. A helical membrane pass occupies residues 164 to 182; that stretch reads WMGLLFNLSGTFVSLNDAV. Topologically, residues 183–185 are periplasmic; that stretch reads VGA. Residues 186–204 traverse the membrane as a helical segment; the sequence is MAGYLSLWLLYWAFKYATG. Residues 205 to 214 lie on the Cytoplasmic side of the membrane; that stretch reads KEALGYGDFK. A helical membrane pass occupies residues 215 to 233; it reads LLAALGAWLGWQALPNLVL. Over 234-236 the chain is Periplasmic; it reads VAA. A helical membrane pass occupies residues 237-254; it reads LSGLVVTLIWRGLRKEDT. Over 255–257 the chain is Cytoplasmic; sequence AKP. The chain crosses the membrane as a helical span at residues 258–276; it reads LAFGPWLAIGGVFGMIMNG. The Periplasmic segment spans residues 277 to 279; sequence FNL.

It belongs to the peptidase A24 family.

It localises to the cell inner membrane. It carries out the reaction Typically cleaves a -Gly-|-Phe- bond to release an N-terminal, basic peptide of 5-8 residues from type IV prepilin, and then N-methylates the new N-terminal amino group, the methyl donor being S-adenosyl-L-methionine.. Functionally, plays a role in type II pseudopili formation by proteolytically removing the leader sequence from substrate proteins and subsequently monomethylating the alpha-amino group of the newly exposed N-terminal phenylalanine. Substrates include proteins required for biogenesis of the type II general secretory apparatus. In Pectobacterium carotovorum subsp. carotovorum (Erwinia carotovora subsp. carotovora), this protein is Prepilin leader peptidase/N-methyltransferase (outO).